The chain runs to 280 residues: NAD kinase (280 aa).

Asp-67 (proton acceptor) is an active-site residue. NAD(+) is bound by residues 67-68 (DG), Arg-72, 138-139 (ND), Asp-167, Ala-175, 178-183 (TAYSLS), and Gln-237.

Belongs to the NAD kinase family. The cofactor is a divalent metal cation.

Its subcellular location is the cytoplasm. It carries out the reaction NAD(+) + ATP = ADP + NADP(+) + H(+). In terms of biological role, involved in the regulation of the intracellular balance of NAD and NADP, and is a key enzyme in the biosynthesis of NADP. Catalyzes specifically the phosphorylation on 2'-hydroxyl of the adenosine moiety of NAD to yield NADP. The polypeptide is NAD kinase (Aeropyrum pernix (strain ATCC 700893 / DSM 11879 / JCM 9820 / NBRC 100138 / K1)).